A 99-amino-acid chain; its full sequence is Protein RnfH (99 aa).

It belongs to the UPF0125 (RnfH) family.

The chain is Protein RnfH from Tolumonas auensis (strain DSM 9187 / NBRC 110442 / TA 4).